A 273-amino-acid chain; its full sequence is Dermonecrotic toxin LhSicTox-alphaIA2bi (273 aa).

Mg(2+) contacts are provided by Glu-25 and Asp-27. The active-site Nucleophile is His-41. 2 disulfide bridges follow: Cys-45/Cys-51 and Cys-47/Cys-190. Mg(2+) is bound at residue Asp-85.

The protein belongs to the arthropod phospholipase D family. Class II subfamily. The cofactor is Mg(2+). In terms of tissue distribution, expressed by the venom gland.

The protein resides in the secreted. The enzyme catalyses an N-(acyl)-sphingosylphosphocholine = an N-(acyl)-sphingosyl-1,3-cyclic phosphate + choline. It catalyses the reaction an N-(acyl)-sphingosylphosphoethanolamine = an N-(acyl)-sphingosyl-1,3-cyclic phosphate + ethanolamine. The catalysed reaction is a 1-acyl-sn-glycero-3-phosphocholine = a 1-acyl-sn-glycero-2,3-cyclic phosphate + choline. It carries out the reaction a 1-acyl-sn-glycero-3-phosphoethanolamine = a 1-acyl-sn-glycero-2,3-cyclic phosphate + ethanolamine. Its function is as follows. Dermonecrotic toxins cleave the phosphodiester linkage between the phosphate and headgroup of certain phospholipids (sphingolipid and lysolipid substrates), forming an alcohol (often choline) and a cyclic phosphate. This toxin acts on sphingomyelin (SM). It may also act on ceramide phosphoethanolamine (CPE), lysophosphatidylcholine (LPC) and lysophosphatidylethanolamine (LPE), but not on lysophosphatidylserine (LPS), and lysophosphatidylglycerol (LPG). It acts by transphosphatidylation, releasing exclusively cyclic phosphate products as second products. Induces dermonecrosis, hemolysis, increased vascular permeability, edema, inflammatory response, and platelet aggregation. This is Dermonecrotic toxin LhSicTox-alphaIA2bi from Loxosceles hirsuta (Recluse spider).